The chain runs to 1507 residues: Protein similar (1507 aa).

A disordered region spans residues 1–85; that stretch reads MVSLIDTIEA…KSRDAARCRR (85 aa). A compositionally biased stretch (low complexity) spans 26–49; sequence SASSSSCSSSFSSSPPSSSVGSPS. The span at 72-85 shows a compositional bias: basic and acidic residues; sequence KRKEKSRDAARCRR. Residues 72–125 enclose the bHLH domain; the sequence is KRKEKSRDAARCRRSKETEIFMELSAALPLKTDDVNQLDKASVMRITIAFLKIR. PAS domains are found at residues 167–240 and 307–377; these read NGAE…LAQK and PHPS…LSKG. The region spanning 381–422 is the PAC domain; the sequence is TSRYRFLGKYGGYCWILSQATIVYDKLKPQSVVCVNYVISNL. 4 disordered regions span residues 433–459, 541–588, 706–832, and 900–951; these read QQTA…KAAD, HSPG…PPPT, TCST…CSPN, and YAGN…QAAV. Over residues 439–459 the composition is skewed to basic and acidic residues; it reads EQKEQHHQAAETEKEPEKAAD. Over residues 548–559 the composition is skewed to polar residues; the sequence is ITAQLLSGSSSG. A compositionally biased stretch (pro residues) spans 578 to 588; that stretch reads SPAPPLTPPPT. Residues 692–863 form an ODD region; it reads TCLLPEDINS…IDDDMPLLTE (172 aa). Over residues 706–717 the composition is skewed to polar residues; that stretch reads TCSTTASGQHYQ. Low complexity-rich tracts occupy residues 718–745 and 754–777; these read SPSS…LSPL and SNPS…QQQH. A compositionally biased stretch (polar residues) spans 803–818; the sequence is DTSCSQHLHSPSITSK. Composition is skewed to low complexity over residues 823–832, 907–918, and 926–951; these read SSLPSLCSPN, QQQQQQPQLQQQ, and SSPA…QAAV. Residues 880–908 are a coiled coil; the sequence is KEIDAIQQQLQQLQQQHHQQYAGNTGYQQ. Coiled coils occupy residues 982 to 1054 and 1110 to 1162; these read AEEC…YDVQ and QLLQ…QLQQ. Disordered regions lie at residues 1204-1228, 1251-1287, and 1356-1460; these read PQQQ…VESK, KDPA…QSNS, and FGGS…KTSI. The span at 1413 to 1423 shows a compositional bias: polar residues; sequence SSTSNSTNQAE.

Efficient DNA binding requires dimerization with another bHLH protein. Interacts with Vhl. In terms of tissue distribution, ubiquitously expressed in the embryo.

Its subcellular location is the cytoplasm. The protein resides in the nucleus. Functions as a transcriptional regulator of the adaptive response to hypoxia. Binds to core DNA sequence 5'-[AG]CGTG-3' within the hypoxia response element (HRE) of target gene promoters. This chain is Protein similar (sima), found in Drosophila melanogaster (Fruit fly).